The primary structure comprises 379 residues: Homoserine O-succinyltransferase (379 aa).

Residues 48 to 357 (NAVLICHALS…SAHGHDAFLM (310 aa)) form the AB hydrolase-1 domain. Ser154 acts as the Nucleophile in catalysis. Residue Arg224 participates in substrate binding. Active-site residues include Asp319 and His352. Asp353 is a binding site for substrate.

It belongs to the AB hydrolase superfamily. MetX family. As to quaternary structure, homodimer.

It is found in the cytoplasm. The enzyme catalyses L-homoserine + succinyl-CoA = O-succinyl-L-homoserine + CoA. It participates in amino-acid biosynthesis; L-methionine biosynthesis via de novo pathway; O-succinyl-L-homoserine from L-homoserine: step 1/1. Transfers a succinyl group from succinyl-CoA to L-homoserine, forming succinyl-L-homoserine. The protein is Homoserine O-succinyltransferase of Neisseria gonorrhoeae (strain ATCC 700825 / FA 1090).